Here is a 116-residue protein sequence, read N- to C-terminus: uncharacterized protein (116 aa).

This is an uncharacterized protein from Bacillus subtilis (strain 168).